Consider the following 303-residue polypeptide: Phosphatidylglycerol--prolipoprotein diacylglyceryl transferase (303 aa).

4 helical membrane-spanning segments follow: residues 18–38, 58–78, 106–126, and 133–153; these read LGPFSLRWYGLLIAISVLVGL, LLPILVLASVIGARIYYVAFE, IWGGGIAIHGALIMGTLSIIF, and EHFWDVIDVLVPSVALGQAIG. R154 contributes to the a 1,2-diacyl-sn-glycero-3-phospho-(1'-sn-glycerol) binding site. 3 helical membrane-spanning segments follow: residues 193 to 213, 223 to 243, and 266 to 286; these read PTFLYESVWNIFVFGILIFLF, LPPGSLSCLYLITYSLGRFWI, and IAQLISLFLISAGLLGIWRIY.

Belongs to the Lgt family.

The protein localises to the cell inner membrane. It catalyses the reaction L-cysteinyl-[prolipoprotein] + a 1,2-diacyl-sn-glycero-3-phospho-(1'-sn-glycerol) = an S-1,2-diacyl-sn-glyceryl-L-cysteinyl-[prolipoprotein] + sn-glycerol 1-phosphate + H(+). It participates in protein modification; lipoprotein biosynthesis (diacylglyceryl transfer). Functionally, catalyzes the transfer of the diacylglyceryl group from phosphatidylglycerol to the sulfhydryl group of the N-terminal cysteine of a prolipoprotein, the first step in the formation of mature lipoproteins. In Prochlorococcus marinus (strain NATL2A), this protein is Phosphatidylglycerol--prolipoprotein diacylglyceryl transferase.